The chain runs to 199 residues: Guanylate kinase (199 aa).

The 180-residue stretch at Val-19 to Ser-198 folds into the Guanylate kinase-like domain. Gly-26–Gly-33 lines the ATP pocket.

The protein belongs to the guanylate kinase family.

It localises to the cytoplasm. It carries out the reaction GMP + ATP = GDP + ADP. Its function is as follows. Essential for recycling GMP and indirectly, cGMP. This chain is Guanylate kinase, found in Cutibacterium acnes (strain DSM 16379 / KPA171202) (Propionibacterium acnes).